The sequence spans 515 residues: GMP synthase [glutamine-hydrolyzing] (515 aa).

The Glutamine amidotransferase type-1 domain maps to 6 to 198 (KVIIIDYGSQ…LFHVAKLKAD (193 aa)). Residue Cys83 is the Nucleophile of the active site. Residues His172 and Glu174 contribute to the active site. The region spanning 199–390 (WTMSSFVERA…LGLPDFIIWR (192 aa)) is the GMPS ATP-PPase domain. 226 to 232 (SGGIDST) is a binding site for ATP.

As to quaternary structure, homodimer.

The catalysed reaction is XMP + L-glutamine + ATP + H2O = GMP + L-glutamate + AMP + diphosphate + 2 H(+). It participates in purine metabolism; GMP biosynthesis; GMP from XMP (L-Gln route): step 1/1. Functionally, catalyzes the synthesis of GMP from XMP. The sequence is that of GMP synthase [glutamine-hydrolyzing] from Nitratidesulfovibrio vulgaris (strain DSM 19637 / Miyazaki F) (Desulfovibrio vulgaris).